The chain runs to 341 residues: UDP-glucuronic acid decarboxylase 5 (341 aa).

The disordered stretch occupies residues 1–21 (MASSDKQTSPKPPPSPSPLRN). 60-85 (DNYFTGSKDNLKKWIGHPRFELIRHD) serves as a coordination point for NAD(+). Residue Arg169 coordinates substrate. Tyr172 acts as the Proton acceptor in catalysis. Position 172–176 (172–176 (YDEGK)) interacts with NAD(+). Asn201 contributes to the substrate binding site. Arg213 is a binding site for NAD(+). Residues 214 to 218 (VVSNF), 231 to 238 (QKPGTQTR), and 298 to 302 (DPRQR) each bind substrate.

Belongs to the NAD(P)-dependent epimerase/dehydratase family. UDP-glucuronic acid decarboxylase subfamily. NAD(+) is required as a cofactor.

The protein localises to the cytoplasm. The catalysed reaction is UDP-alpha-D-glucuronate + H(+) = UDP-alpha-D-xylose + CO2. The protein operates within nucleotide-sugar biosynthesis; UDP-alpha-D-xylose biosynthesis; UDP-alpha-D-xylose from UDP-alpha-D-glucuronate: step 1/1. In terms of biological role, catalyzes the NAD-dependent decarboxylation of UDP-glucuronic acid to UDP-xylose. Necessary for the biosynthesis of the core tetrasaccharide in glycosaminoglycan biosynthesis. The polypeptide is UDP-glucuronic acid decarboxylase 5 (UXS5) (Arabidopsis thaliana (Mouse-ear cress)).